The sequence spans 215 residues: Probable transaldolase 1 (215 aa).

The active-site Schiff-base intermediate with substrate is the Lys-83.

It belongs to the transaldolase family. Type 3B subfamily.

The protein localises to the cytoplasm. The catalysed reaction is D-sedoheptulose 7-phosphate + D-glyceraldehyde 3-phosphate = D-erythrose 4-phosphate + beta-D-fructose 6-phosphate. The protein operates within carbohydrate degradation; pentose phosphate pathway; D-glyceraldehyde 3-phosphate and beta-D-fructose 6-phosphate from D-ribose 5-phosphate and D-xylulose 5-phosphate (non-oxidative stage): step 2/3. Its function is as follows. Transaldolase is important for the balance of metabolites in the pentose-phosphate pathway. The chain is Probable transaldolase 1 from Bacillus anthracis.